The sequence spans 201 residues: uncharacterized protein (201 aa).

Disordered stretches follow at residues 46–80 (PLVN…SYDE) and 143–201 (SSTS…ANPA). Composition is skewed to polar residues over residues 64-78 (GSQN…SQSY) and 143-167 (SSTS…NSPA).

This is an uncharacterized protein from Legionella pneumophila.